The following is a 172-amino-acid chain: Shikimate kinase (172 aa).

11 to 16 provides a ligand contact to ATP; that stretch reads GAGKST. S15 serves as a coordination point for Mg(2+). D33, R57, and G79 together coordinate substrate. Residue R117 participates in ATP binding. Residue R136 participates in substrate binding. Residue R153 participates in ATP binding.

It belongs to the shikimate kinase family. As to quaternary structure, monomer. Requires Mg(2+) as cofactor.

The protein resides in the cytoplasm. The catalysed reaction is shikimate + ATP = 3-phosphoshikimate + ADP + H(+). It functions in the pathway metabolic intermediate biosynthesis; chorismate biosynthesis; chorismate from D-erythrose 4-phosphate and phosphoenolpyruvate: step 5/7. Its function is as follows. Catalyzes the specific phosphorylation of the 3-hydroxyl group of shikimic acid using ATP as a cosubstrate. The sequence is that of Shikimate kinase from Pseudomonas savastanoi pv. phaseolicola (strain 1448A / Race 6) (Pseudomonas syringae pv. phaseolicola (strain 1448A / Race 6)).